We begin with the raw amino-acid sequence, 1465 residues long: Myomesin-2 (1465 aa).

The interval 38–61 is disordered; sequence ASTQASSQKSLSQRSSSQRASSQT. Over residues 41 to 61 the composition is skewed to low complexity; the sequence is QASSQKSLSQRSSSQRASSQT. 2 consecutive Ig-like C2-type domains span residues 154–245 and 266–371; these read PEIL…AAVV and PLSS…AFLF. Fibronectin type-III domains follow at residues 385–480, 513–608, 614–707, 710–812, and 815–912; these read APMD…ALDP, PPTG…AQDV, APGR…VQAA, VPSH…TMPE, and PAYD…ARPG. 3 consecutive Ig-like C2-type domains span residues 904-1002, 1130-1211, and 1345-1434; these read PVLV…EELE, PHFA…QDVS, and RLIG…VTVS. Positions 1442–1465 are disordered; that stretch reads IPDMAPPQQAKPKLIPASASAAGQ.

As to quaternary structure, interacts with TTN/titin.

Its subcellular location is the cytoplasm. The protein resides in the myofibril. It is found in the sarcomere. It localises to the m line. Functionally, major component of the vertebrate myofibrillar M band. Binds myosin, titin, and light meromyosin. This binding is dose dependent. This chain is Myomesin-2 (MYOM2), found in Homo sapiens (Human).